The sequence spans 548 residues: Pentatricopeptide repeat-containing protein At5g15300 (548 aa).

11 PPR repeats span residues Asp-76 to Pro-110, Asp-111 to Leu-145, Asn-146 to Ala-176, His-177 to Ala-211, Trp-212 to Lys-238, Asp-239 to Pro-273, Asp-274 to Ser-308, Gly-314 to Thr-348, Trp-349 to Pro-378, Asn-379 to Met-409, and Asn-415 to Glu-445. A type E motif region spans residues Val-450 to Asp-525.

It belongs to the PPR family. PCMP-E subfamily.

The chain is Pentatricopeptide repeat-containing protein At5g15300 (PCMP-E40) from Arabidopsis thaliana (Mouse-ear cress).